A 288-amino-acid chain; its full sequence is HTH-type transcriptional regulator YofA (288 aa).

The 58-residue stretch at 1-58 (MESGDLKIFQAVARKGSISKAAESLHYVQSNVTNRIQQLERQLQTQLFYRTNRGMTLT) folds into the HTH lysR-type domain. Residues 18-37 (ISKAAESLHYVQSNVTNRIQ) constitute a DNA-binding region (H-T-H motif).

Belongs to the LysR transcriptional regulatory family.

The protein resides in the cytoplasm. In terms of biological role, regulates expression of the cell division protein ftsW, and is essential for cell viability during stationary phase. This chain is HTH-type transcriptional regulator YofA (yofA), found in Bacillus velezensis (strain DSM 23117 / BGSC 10A6 / LMG 26770 / FZB42) (Bacillus amyloliquefaciens subsp. plantarum).